The chain runs to 246 residues: Large ribosomal subunit protein uL3 (246 aa).

Residue Gln151 is modified to N5-methylglutamine.

The protein belongs to the universal ribosomal protein uL3 family. Part of the 50S ribosomal subunit. Forms a cluster with proteins L14 and L19. Post-translationally, methylated by PrmB.

In terms of biological role, one of the primary rRNA binding proteins, it binds directly near the 3'-end of the 23S rRNA, where it nucleates assembly of the 50S subunit. The polypeptide is Large ribosomal subunit protein uL3 (Bartonella henselae (strain ATCC 49882 / DSM 28221 / CCUG 30454 / Houston 1) (Rochalimaea henselae)).